Reading from the N-terminus, the 543-residue chain is MFS-type transporter pyvG (543 aa).

A disordered region spans residues P24–P71. N-linked (GlcNAc...) asparagine glycosylation is present at N94. Transmembrane regions (helical) follow at residues L101–F121, L141–S161, I178–L198, G203–L223, L230–F250, W259–P279, P335–F355, G374–F394, L415–T435, L440–I460, A476–W496, and L512–P532.

The protein belongs to the major facilitator superfamily. CAR1 family.

The protein localises to the cell membrane. Functionally, MFS-type transporter; part of the gene cluster that mediates the biosynthesis of pyranoviolin A, a pyranonigrin analog with a C-3 methoxy group. May be involved in the secretion of pyranoviolin A. The polypeptide is MFS-type transporter pyvG (Aspergillus violaceofuscus (strain CBS 115571)).